The following is a 436-amino-acid chain: Histidine--tRNA ligase (436 aa).

Belongs to the class-II aminoacyl-tRNA synthetase family. In terms of assembly, homodimer.

It is found in the cytoplasm. The enzyme catalyses tRNA(His) + L-histidine + ATP = L-histidyl-tRNA(His) + AMP + diphosphate + H(+). The protein is Histidine--tRNA ligase of Psychrobacter sp. (strain PRwf-1).